The following is a 112-amino-acid chain: Protein SMALL AUXIN UP-REGULATED RNA 10 (112 aa).

This sequence belongs to the ARG7 family. Confined to the veins and petioles of rosette leaves and cauline leaves, and specifically expressed at the abaxial side of inflorescence branche; relocates to both the adaxial (Ad) and abaxial (Ab) sides of the branch in reduced red:far-red (R:FR) light, during shade. Also present in flowers.

The protein localises to the cell membrane. Its function is as follows. Provide a mechanistic link between auxin and plasma membrane H(+)-ATPases (PM H(+)-ATPases, e.g. AHA1 and AHA2), and triggers PM H(+)-ATPases activity by promoting phosphorylation of their C-terminal autoinhibitory domain as a result of PP2C-D subfamily of type 2C phosphatases inhibition, thus leading to the acidification of the apoplast and the facilitation of solutes and water uptake to drive cell expansion. Triggers plant growth probably by promoting cell elongation. Regulates branch angles and bending. In Arabidopsis thaliana (Mouse-ear cress), this protein is Protein SMALL AUXIN UP-REGULATED RNA 10.